Here is a 163-residue protein sequence, read N- to C-terminus: Iron-sulfur cluster assembly protein 2 (163 aa).

The N-terminal 48 residues, 1-48 (MMMLRQTSRKAYLGLQASPLGLGRRLYHENVIDHFENPRNVGSFNRND), are a transit peptide targeting the mitochondrion.

The protein belongs to the NifU family. In terms of assembly, component of the core Fe-S cluster (ISC) assembly machinery. [2Fe-2S] cluster serves as cofactor. As to expression, mostly expressed in leaves, pollen and flowers.

It is found in the mitochondrion matrix. It participates in cofactor biosynthesis; iron-sulfur cluster biosynthesis. Its function is as follows. Scaffold protein for the de novo synthesis of iron-sulfur (Fe-S) clusters within mitochondria, which is required for maturation of both mitochondrial and cytoplasmic [2Fe-2S] and [4Fe-4S] proteins. First, a [2Fe-2S] cluster is transiently assembled on the scaffold protein ISCU (ISU1, ISU2 or ISU3). In a second step, the cluster is released from ISCU, transferred to a glutaredoxin, followed by the formation of mitochondrial [2Fe-2S] proteins, the synthesis of [4Fe-4S] clusters and their target-specific insertion into the recipient apoproteins. Cluster assembly on ISCU depends on the function of the cysteine desulfurase complex NFS1-ISD11, which serves as the sulfur donor for cluster synthesis, the iron-binding protein frataxin as the putative iron donor, and the electron transfer chain comprised of ferredoxin reductase and ferredoxin, which receive their electrons from NADH. This chain is Iron-sulfur cluster assembly protein 2 (ISU2), found in Arabidopsis thaliana (Mouse-ear cress).